Reading from the N-terminus, the 267-residue chain is MEMO1 family protein MM_1761 (267 aa).

Belongs to the MEMO1 family.

The protein is MEMO1 family protein MM_1761 of Methanosarcina mazei (strain ATCC BAA-159 / DSM 3647 / Goe1 / Go1 / JCM 11833 / OCM 88) (Methanosarcina frisia).